Here is a 164-residue protein sequence, read N- to C-terminus: Phosphopantetheine adenylyltransferase (164 aa).

Ser-9 contacts substrate. Residues 9 to 10 (SF) and His-17 contribute to the ATP site. Substrate contacts are provided by Lys-41, Val-78, and Arg-92. ATP contacts are provided by residues 93–95 (GLR), Glu-103, and 128–134 (VRTITAT).

This sequence belongs to the bacterial CoaD family. As to quaternary structure, homohexamer. The cofactor is Mg(2+).

It localises to the cytoplasm. The catalysed reaction is (R)-4'-phosphopantetheine + ATP + H(+) = 3'-dephospho-CoA + diphosphate. The protein operates within cofactor biosynthesis; coenzyme A biosynthesis; CoA from (R)-pantothenate: step 4/5. Functionally, reversibly transfers an adenylyl group from ATP to 4'-phosphopantetheine, yielding dephospho-CoA (dPCoA) and pyrophosphate. The polypeptide is Phosphopantetheine adenylyltransferase (Brucella abortus (strain 2308)).